Reading from the N-terminus, the 321-residue chain is Probable pectate lyase A (321 aa).

Positions methionine 1 to alanine 18 are cleaved as a signal peptide. The N-linked (GlcNAc...) asparagine glycan is linked to asparagine 93. 3 residues coordinate Ca(2+): aspartate 134, aspartate 163, and aspartate 167. Arginine 220 is a catalytic residue. Asparagine 238 carries an N-linked (GlcNAc...) asparagine glycan.

This sequence belongs to the polysaccharide lyase 1 family. It depends on Ca(2+) as a cofactor.

The protein localises to the secreted. The catalysed reaction is Eliminative cleavage of (1-&gt;4)-alpha-D-galacturonan to give oligosaccharides with 4-deoxy-alpha-D-galact-4-enuronosyl groups at their non-reducing ends.. Functionally, pectinolytic enzyme consist of four classes of enzymes: pectin lyase, polygalacturonase, pectin methylesterase and rhamnogalacturonase. Among pectinolytic enzymes, pectin lyase is the most important in depolymerization of pectin, since it cleaves internal glycosidic bonds of highly methylated pectins. Favors pectate, the anion, over pectin, the methyl ester. The chain is Probable pectate lyase A (plyA) from Aspergillus fumigatus (strain ATCC MYA-4609 / CBS 101355 / FGSC A1100 / Af293) (Neosartorya fumigata).